Here is a 548-residue protein sequence, read N- to C-terminus: MAVALNIADLAEHAIDAVPDRVAVICGDEQLTYAQLEDKANRLAHHLIDQGVQKDDKVGLYCRNRIEIVIAMLGIVKAGAILVNVNFRYVEGELRYLFDNSDMVALVHERRYADRVANVLPDTPHVRTILVVEDGSDQDYRRYGGVEFYSAIAAGSPERDFGERSADAIYLLYTGGTTGFPKGVMWRHEDIYRVLFGGTDFATGEFVKDEYDLAKAAAANPPMIRYPIPPMIHGATQSATWMALFSGQTTVLAPEFNADEVWRTIHKHKVNLLFFTGDAMARPLVDALVKGNDYDLSSLFLLASTAALFSPSIKEKLLELLPNRVITDSIGSSETGFGGTSVVAAGQAHGGGPRVRIDHRTVVLDDDGNEVKPGSGMRGVIAKKGNIPVGYYKDEKKTAETFRTINGVRYAIPGDYAQVEEDGTVTMLGRGSVSINSGGEKVYPEEVEAALKGHPDVFDALVVGVPDPRYGQQVAAVVQARPGCRPSLAELDSFVRSEIAGYKVPRSLWFVDEVKRSPAGKPDYRWAKEQTEARPADDVHAGHVTSGG.

Residues 174 to 182, aspartate 415, arginine 430, and lysine 521 each bind ATP; that span reads TGGTTGFPK. Residues 520 to 541 show a composition bias toward basic and acidic residues; it reads GKPDYRWAKEQTEARPADDVHA. The interval 520–548 is disordered; that stretch reads GKPDYRWAKEQTEARPADDVHAGHVTSGG.

The protein belongs to the ATP-dependent AMP-binding enzyme family.

It carries out the reaction a medium-chain fatty acid + ATP + CoA = a medium-chain fatty acyl-CoA + AMP + diphosphate. The enzyme catalyses a long-chain fatty acid + ATP + CoA = a long-chain fatty acyl-CoA + AMP + diphosphate. It catalyses the reaction (25S)-3-oxocholest-4-en-26-oate + ATP + CoA = (25S)-3-oxocholest-4-en-26-oyl-CoA + AMP + diphosphate. It functions in the pathway lipid metabolism; fatty acid biosynthesis. Its pathway is steroid metabolism; cholesterol metabolism. Catalyzes the activation of medium/long-chain fatty acids as acyl-coenzyme A (acyl-CoA), which are then transferred to the multifunctional polyketide synthase (PKS) type III for further chain extension. Also involved in the degradation of cholesterol via the degradation of the side chains of C-24 branched-chain sterols. Catalyzes the ATP-dependent CoA thioesterification of the sterol 3-oxocholest-4-en-26-oate to yield 3-oxocholest-4-en-26-oyl-CoA. In Mycobacterium bovis (strain ATCC BAA-935 / AF2122/97), this protein is Medium/long-chain-fatty-acid--CoA/3-oxocholest-4-en-26-oate--CoA ligase.